A 961-amino-acid polypeptide reads, in one-letter code: Alanine--tRNA ligase, chloroplastic/mitochondrial (961 aa).

His641, His645, Cys743, and His747 together coordinate Zn(2+).

Belongs to the class-II aminoacyl-tRNA synthetase family. In terms of assembly, monomer. It depends on Zn(2+) as a cofactor.

The protein localises to the plastid. It localises to the chloroplast. The protein resides in the mitochondrion. It catalyses the reaction tRNA(Ala) + L-alanine + ATP = L-alanyl-tRNA(Ala) + AMP + diphosphate. Functionally, catalyzes the attachment of alanine to tRNA(Ala) in a two-step reaction: alanine is first activated by ATP to form Ala-AMP and then transferred to the acceptor end of tRNA(Ala). Also edits incorrectly charged tRNA(Ala) via its editing domain. The polypeptide is Alanine--tRNA ligase, chloroplastic/mitochondrial (Sorghum bicolor (Sorghum)).